The primary structure comprises 329 residues: 4-hydroxythreonine-4-phosphate dehydrogenase (329 aa).

Substrate is bound by residues His137 and Thr138. His167, His212, and His267 together coordinate a divalent metal cation. Substrate-binding residues include Lys275, Asn284, and Arg293.

The protein belongs to the PdxA family. As to quaternary structure, homodimer. Zn(2+) serves as cofactor. It depends on Mg(2+) as a cofactor. The cofactor is Co(2+).

The protein resides in the cytoplasm. The catalysed reaction is 4-(phosphooxy)-L-threonine + NAD(+) = 3-amino-2-oxopropyl phosphate + CO2 + NADH. It functions in the pathway cofactor biosynthesis; pyridoxine 5'-phosphate biosynthesis; pyridoxine 5'-phosphate from D-erythrose 4-phosphate: step 4/5. In terms of biological role, catalyzes the NAD(P)-dependent oxidation of 4-(phosphooxy)-L-threonine (HTP) into 2-amino-3-oxo-4-(phosphooxy)butyric acid which spontaneously decarboxylates to form 3-amino-2-oxopropyl phosphate (AHAP). The sequence is that of 4-hydroxythreonine-4-phosphate dehydrogenase from Stutzerimonas stutzeri (strain A1501) (Pseudomonas stutzeri).